The primary structure comprises 897 residues: Protein translocase subunit SecA (897 aa).

Residues Gln-89, 107–111 (GEGKT), and Asp-517 each bind ATP. Over residues 839–856 (DDAQATHSNPNEQTKQAS) the composition is skewed to polar residues. The disordered stretch occupies residues 839-897 (DDAQATHSNPNEQTKQASITNNIQTQTDQQNTYQRKEKKVGRNEPCPCGSGKKYKKCHG). Positions 857 to 870 (ITNNIQTQTDQQNT) are enriched in low complexity. 4 residues coordinate Zn(2+): Cys-884, Cys-886, Cys-895, and His-896.

The protein belongs to the SecA family. In terms of assembly, monomer and homodimer. Part of the essential Sec protein translocation apparatus which comprises SecA, SecYEG and auxiliary proteins SecDF-YajC and YidC. Requires Zn(2+) as cofactor.

The protein localises to the cell inner membrane. Its subcellular location is the cytoplasm. It carries out the reaction ATP + H2O + cellular proteinSide 1 = ADP + phosphate + cellular proteinSide 2.. Functionally, part of the Sec protein translocase complex. Interacts with the SecYEG preprotein conducting channel. Has a central role in coupling the hydrolysis of ATP to the transfer of proteins into and across the cell membrane, serving as an ATP-driven molecular motor driving the stepwise translocation of polypeptide chains across the membrane. This is Protein translocase subunit SecA from Vesicomyosocius okutanii subsp. Calyptogena okutanii (strain HA).